Reading from the N-terminus, the 425-residue chain is Serine--tRNA ligase (425 aa).

An L-serine-binding site is contributed by 231–233; that stretch reads TAE. 262-264 serves as a coordination point for ATP; it reads RSE. Glu-285 contacts L-serine. 349–352 provides a ligand contact to ATP; sequence EISS. L-serine is bound at residue Ser-385.

The protein belongs to the class-II aminoacyl-tRNA synthetase family. Type-1 seryl-tRNA synthetase subfamily. As to quaternary structure, homodimer. The tRNA molecule binds across the dimer.

The protein resides in the cytoplasm. It carries out the reaction tRNA(Ser) + L-serine + ATP = L-seryl-tRNA(Ser) + AMP + diphosphate + H(+). The enzyme catalyses tRNA(Sec) + L-serine + ATP = L-seryl-tRNA(Sec) + AMP + diphosphate + H(+). It functions in the pathway aminoacyl-tRNA biosynthesis; selenocysteinyl-tRNA(Sec) biosynthesis; L-seryl-tRNA(Sec) from L-serine and tRNA(Sec): step 1/1. Its function is as follows. Catalyzes the attachment of serine to tRNA(Ser). Is also able to aminoacylate tRNA(Sec) with serine, to form the misacylated tRNA L-seryl-tRNA(Sec), which will be further converted into selenocysteinyl-tRNA(Sec). This is Serine--tRNA ligase from Bacillus licheniformis (strain ATCC 14580 / DSM 13 / JCM 2505 / CCUG 7422 / NBRC 12200 / NCIMB 9375 / NCTC 10341 / NRRL NRS-1264 / Gibson 46).